Consider the following 377-residue polypeptide: Ferric enterobactin transport protein FepE (377 aa).

Residues M1–K41 are Cytoplasmic-facing. The chain crosses the membrane as a helical span at residues T42 to P62. Topologically, residues Q63 to K338 are periplasmic. Residues A339–L359 form a helical membrane-spanning segment. The Cytoplasmic portion of the chain corresponds to R360 to V377.

It belongs to the WzzB/Cld/Rol family.

It localises to the cell inner membrane. In terms of biological role, part of the ferric enterobactin transport system. The sequence is that of Ferric enterobactin transport protein FepE (fepE) from Escherichia coli (strain K12).